Reading from the N-terminus, the 397-residue chain is Cysteine desulfurase (397 aa).

Pyridoxal 5'-phosphate is bound by residues N148, Q176, and 196–198; that span reads SAH. K199 is subject to N6-(pyridoxal phosphate)lysine. T234 serves as a coordination point for pyridoxal 5'-phosphate. C321 (cysteine persulfide intermediate) is an active-site residue. A [2Fe-2S] cluster-binding site is contributed by C321.

It belongs to the class-V pyridoxal-phosphate-dependent aminotransferase family. NifS/IscS subfamily. Homodimer. The cofactor is pyridoxal 5'-phosphate.

The catalysed reaction is (sulfur carrier)-H + L-cysteine = (sulfur carrier)-SH + L-alanine. Catalyzes the removal of elemental sulfur atoms from cysteine to produce alanine. Seems to participate in the biosynthesis of the nitrogenase metalloclusters by providing the inorganic sulfur required for the Fe-S core formation. The polypeptide is Cysteine desulfurase (Klebsiella pneumoniae).